The following is a 379-amino-acid chain: MTNIRKKHPLLKIINNSLIDLPTPPNISSLWNFGSLLGACLTIQIITGLFLAMHYTADTTTAFSSVAHICRDVNYGWTIRYLHANGASMFFLCLFIHVGRGLYYGSFTLLETWNVGIILLFSVMATAFMGYVLPWGQMSFWGATVITNLLSAIPYVGTDLVEWIWGGFSVSKATLTRFFALHFILPFIISALVMIHLLFLHETGSNNPLGMPSNSDKIPFHPYYTTKDFLGLLLLILLLMTTALFYPDLLGDPDNYTPANPLNTPPHIKPEWYFLFAYAILRSIPNKLGGVLALILSILILMIIPFLQPNKQQTMTFRPLSQFLFWILVADLLTLTWIGGQPVEDPFINIGQMASMLYFFLMIFIMPTSCLIENKMLKW.

A run of 4 helical transmembrane segments spans residues 33-53 (FGSL…FLAM), 77-98 (WTIR…FIHV), 113-133 (WNVG…GYVL), and 178-198 (FFAL…IHLL). Heme b contacts are provided by His-83 and His-97. 2 residues coordinate heme b: His-182 and His-196. Position 201 (His-201) interacts with a ubiquinone. Transmembrane regions (helical) follow at residues 226-246 (TKDF…ALFY), 288-308 (LGGV…PFLQ), 320-340 (LSQF…WIGG), and 347-367 (FINI…FIMP).

It belongs to the cytochrome b family. The cytochrome bc1 complex contains 11 subunits: 3 respiratory subunits (MT-CYB, CYC1 and UQCRFS1), 2 core proteins (UQCRC1 and UQCRC2) and 6 low-molecular weight proteins (UQCRH/QCR6, UQCRB/QCR7, UQCRQ/QCR8, UQCR10/QCR9, UQCR11/QCR10 and a cleavage product of UQCRFS1). This cytochrome bc1 complex then forms a dimer. It depends on heme b as a cofactor.

The protein localises to the mitochondrion inner membrane. Functionally, component of the ubiquinol-cytochrome c reductase complex (complex III or cytochrome b-c1 complex) that is part of the mitochondrial respiratory chain. The b-c1 complex mediates electron transfer from ubiquinol to cytochrome c. Contributes to the generation of a proton gradient across the mitochondrial membrane that is then used for ATP synthesis. This Lepilemur ankaranensis (Ankarana sportive lemur) protein is Cytochrome b (MT-CYB).